The chain runs to 325 residues: N-acetyl-gamma-glutamyl-phosphate reductase (325 aa).

The active site involves Cys-131.

It belongs to the NAGSA dehydrogenase family. Type 1 subfamily.

The protein localises to the cytoplasm. It carries out the reaction N-acetyl-L-glutamate 5-semialdehyde + phosphate + NADP(+) = N-acetyl-L-glutamyl 5-phosphate + NADPH + H(+). It functions in the pathway amino-acid biosynthesis; L-arginine biosynthesis; N(2)-acetyl-L-ornithine from L-glutamate: step 3/4. Functionally, catalyzes the NADPH-dependent reduction of N-acetyl-5-glutamyl phosphate to yield N-acetyl-L-glutamate 5-semialdehyde. The polypeptide is N-acetyl-gamma-glutamyl-phosphate reductase (Methylobacterium sp. (strain 4-46)).